A 370-amino-acid polypeptide reads, in one-letter code: Anthranilate phosphoribosyltransferase (370 aa).

5-phospho-alpha-D-ribose 1-diphosphate is bound by residues glycine 82, 85–86 (GD), threonine 90, 92–95 (NVST), 110–118 (KHGNRAATS), and serine 122. Residue glycine 82 coordinates anthranilate. Residue serine 94 coordinates Mg(2+). Residue asparagine 113 participates in anthranilate binding. An anthranilate-binding site is contributed by arginine 168. Aspartate 226 and glutamate 227 together coordinate Mg(2+).

This sequence belongs to the anthranilate phosphoribosyltransferase family. As to quaternary structure, homodimer. It depends on Mg(2+) as a cofactor.

It carries out the reaction N-(5-phospho-beta-D-ribosyl)anthranilate + diphosphate = 5-phospho-alpha-D-ribose 1-diphosphate + anthranilate. It functions in the pathway amino-acid biosynthesis; L-tryptophan biosynthesis; L-tryptophan from chorismate: step 2/5. Functionally, catalyzes the transfer of the phosphoribosyl group of 5-phosphorylribose-1-pyrophosphate (PRPP) to anthranilate to yield N-(5'-phosphoribosyl)-anthranilate (PRA). This is Anthranilate phosphoribosyltransferase from Methanosarcina acetivorans (strain ATCC 35395 / DSM 2834 / JCM 12185 / C2A).